The primary structure comprises 291 residues: Homeobox protein SIX2 (291 aa).

Residues 124-183 constitute a DNA-binding region (homeobox); that stretch reads GEETSYCFKEKSRSVLREWYAHNPYPSPREKRELAEATGLTTTQVSNWFKNRRQRDRAAE. The segment at 168 to 279 is disordered; it reads VSNWFKNRRQ…HHHGLQDSIL (112 aa). A compositionally biased stretch (basic and acidic residues) spans 179–190; sequence DRAAEAKERENN. Low complexity predominate over residues 224–233; that stretch reads HSSSSPALLL. Positions 249 to 259 are enriched in pro residues; it reads PPGPSAVPVPV.

This sequence belongs to the SIX/Sine oculis homeobox family. Interacts with TCF7L2; in a canonical Wnt signaling independent manner; prevents transcription of differentiation genes in cap mesenchyme. Interacts with OSR1; form a strong repressor complex with TCF7L2, TLE2 and TLE3 to prevent the activation of Wnt/beta-catenin target genes in the cap mesenchyme. Interacts with HOXA11, EYA1 and EYA3. Strongly expressed in skeletal muscle. Expressed in Wilms' tumor and in the cap mesenchyme of fetal kidney (at protein level).

The protein localises to the nucleus. In terms of biological role, transcription factor that plays an important role in the development of several organs, including kidney, skull and stomach. During kidney development, maintains cap mesenchyme multipotent nephron progenitor cells in an undifferentiated state by opposing the inductive signals emanating from the ureteric bud and cooperates with WNT9B to promote renewing progenitor cells proliferation. Acts through its interaction with TCF7L2 and OSR1 in a canonical Wnt signaling independent manner preventing transcription of differentiation genes in cap mesenchyme such as WNT4. Also acts independently of OSR1 to activate expression of many cap mesenchyme genes, including itself, GDNF and OSR1. During craniofacial development plays a role in growth and elongation of the cranial base through regulation of chondrocyte differentiation. During stomach organogenesis, controls pyloric sphincter formation and mucosal growth through regulation of a gene network including NKX2-5, BMPR1B, BMP4, SOX9 and GREM1. During branchial arch development, acts to mediate HOXA2 control over the insulin-like growth factor pathway. May also be involved in limb tendon and ligament development. Plays a role in cell proliferation and migration. This Homo sapiens (Human) protein is Homeobox protein SIX2 (SIX2).